The sequence spans 404 residues: MSNFLPAEEQLALIQRGTHEIISEEDLLKKLKENRPLRIKAGFDPTAPDLHLGHTVLINKLKAFQDLGHEVTFLIGDYTAMIGDPTGKSATRPPLTREQVEANAKTYQEQVFKILDPNKTKVRFNSEWFNQRTAADLIQLASQQTVSRMLERDDFTKRYNNHQPIAIHEFLYPLVQGYDSIALEADVELGGTDQTFNLLMGRTLQGRYGQESQVCITVPILEGLDGVNKMSKSLGNYIGVFDAPGAMYQKVLSMPDTLIERYFELLSFKSLDEIQGLLDEMANGRNPQDLKKILALELVERFHDADAAANAHKGAGNIITEGEIPEGTPEVTISRGEFGGEIFIASIVRLAGLTKNAAQAKDAVSRGAVKVDWQVVDANFSVKENKTYLIQAGKKAIAQVTFTD.

Residues 45–54 carry the 'HIGH' region motif; sequence PTAPDLHLGH. Residues 229–233 carry the 'KMSKS' region motif; that stretch reads KMSKS. Lysine 232 lines the ATP pocket. Positions 342-402 constitute an S4 RNA-binding domain; sequence IFIASIVRLA…GKKAIAQVTF (61 aa).

It belongs to the class-I aminoacyl-tRNA synthetase family. TyrS type 2 subfamily. Homodimer.

The protein resides in the cytoplasm. The enzyme catalyses tRNA(Tyr) + L-tyrosine + ATP = L-tyrosyl-tRNA(Tyr) + AMP + diphosphate + H(+). In terms of biological role, catalyzes the attachment of tyrosine to tRNA(Tyr) in a two-step reaction: tyrosine is first activated by ATP to form Tyr-AMP and then transferred to the acceptor end of tRNA(Tyr). The chain is Tyrosine--tRNA ligase from Acinetobacter baylyi (strain ATCC 33305 / BD413 / ADP1).